Consider the following 225-residue polypeptide: Peptidyl-prolyl cis-trans isomerase D (225 aa).

The N-terminal stretch at 1-22 (MKLQFFSFITLFACLFTTAIFA) is a signal peptide. In terms of domain architecture, PPIase cyclophilin-type spans 37-195 (YFDINHGDKQ…KEVIIVESGE (159 aa)). Residue asparagine 139 is glycosylated (N-linked (GlcNAc...) asparagine). Positions 222–225 (HDEL) match the Prevents secretion from ER motif.

This sequence belongs to the cyclophilin-type PPIase family. PPIase B subfamily.

The protein resides in the endoplasmic reticulum lumen. The enzyme catalyses [protein]-peptidylproline (omega=180) = [protein]-peptidylproline (omega=0). PPIases accelerate the folding of proteins. It catalyzes the cis-trans isomerization of proline imidic peptide bonds in oligopeptides. The chain is Peptidyl-prolyl cis-trans isomerase D from Saccharomyces cerevisiae (strain ATCC 204508 / S288c) (Baker's yeast).